Consider the following 341-residue polypeptide: Phosphoribosylformylglycinamidine cyclo-ligase (341 aa).

The protein belongs to the AIR synthase family.

The protein localises to the cytoplasm. The enzyme catalyses 2-formamido-N(1)-(5-O-phospho-beta-D-ribosyl)acetamidine + ATP = 5-amino-1-(5-phospho-beta-D-ribosyl)imidazole + ADP + phosphate + H(+). It functions in the pathway purine metabolism; IMP biosynthesis via de novo pathway; 5-amino-1-(5-phospho-D-ribosyl)imidazole from N(2)-formyl-N(1)-(5-phospho-D-ribosyl)glycinamide: step 2/2. This Caldicellulosiruptor bescii (strain ATCC BAA-1888 / DSM 6725 / KCTC 15123 / Z-1320) (Anaerocellum thermophilum) protein is Phosphoribosylformylglycinamidine cyclo-ligase.